We begin with the raw amino-acid sequence, 478 residues long: Patatin-like phospholipase domain-containing protein 2 (478 aa).

The Cytoplasmic segment spans residues 1–8 (MFPRETKW). The helical transmembrane segment at 9–29 (NISFAGCGFLGVYHIGVASCL) threads the bilayer. The 170-residue stretch at 10 to 179 (ISFAGCGFLG…SDNLPLYELK (170 aa)) folds into the PNPLA domain. Positions 14–19 (GCGFLG) match the GXGXXG motif. Residues 30-42 (REHAPFLVANATH) are Extracellular-facing. N39 carries an N-linked (GlcNAc...) asparagine glycan. Residues 43-63 (IYGASAGALTATALVTGACLG) traverse the membrane as a helical segment. The GXSXG signature appears at 45–49 (GASAG). The active-site Nucleophile is the S47. Over 64–137 (EAGANIIEVS…IISHFSSKDE (74 aa)) the chain is Cytoplasmic. K92 is covalently cross-linked (Glycyl lysine isopeptide (Lys-Gly) (interchain with G-Cter in ubiquitin)). A helical membrane pass occupies residues 138–158 (LIQANVCSTFIPVYCGLIPPT). At 159–323 (LQGVRYVDGG…TTLSNMLPVR (165 aa)) the chain is on the extracellular side. The active-site Proton acceptor is D166. The DGA/G motif lies at 166–168 (DGG). The helical transmembrane segment at 324-344 (LATAMMVPYTLPLESAVSFTI) threads the bilayer. Topologically, residues 345–478 (RLLEWLPDVP…PQDPSGLPPC (134 aa)) are cytoplasmic. Residue S366 is modified to Phosphoserine; in vitro. S388 carries the phosphoserine; by PKA modification. Phosphoserine occurs at positions 398 and 422. Residues 456-478 (RAPASPTATDPATPQDPSGLPPC) are disordered. Low complexity predominate over residues 457–478 (APASPTATDPATPQDPSGLPPC). S460 bears the Phosphoserine; in vitro mark.

As to quaternary structure, interacts with ABHD5; this association stimulates PNPLA2 triglyceride hydrolase activity. Interacts with SERPINF1; this interaction stimulates the phospholipase A2 activity of PNPLA2. Despite a colocalization in lipid droplets, it probably does not interact with PLIN. Interacts with PLIN5; prevents interaction with ABHD5. Interacts with FAF2. In terms of processing, phosphorylation at Ser-398 by PKA is increased during fasting and moderate intensity exercise, and moderately increases lipolytic activity. Post-translationally, ubiquitinated by PEX2 in response to reactive oxygen species (ROS), leading to its degradation. Ubiquitination is stimulated by LDAH.

The protein localises to the lipid droplet. It localises to the cell membrane. The protein resides in the cytoplasm. It carries out the reaction a triacylglycerol + H2O = a diacylglycerol + a fatty acid + H(+). The catalysed reaction is a triacylglycerol + H2O = a 1,2-diacylglycerol + a fatty acid + H(+). The enzyme catalyses a triacylglycerol + H2O = a 1,3-diacylglycerol + a fatty acid + H(+). It catalyses the reaction a triacyl-sn-glycerol + H2O = a 1,3-diacyl-sn-glycerol + a fatty acid + H(+). It carries out the reaction a triacyl-sn-glycerol + H2O = a 2,3-diacyl-sn-glycerol + a fatty acid + H(+). The catalysed reaction is a 1-acylglycerol + a 1,3-diacylglycerol = a triacylglycerol + glycerol. The enzyme catalyses a 1-acylglycerol + a 1,2-diacylglycerol = a triacylglycerol + glycerol. It catalyses the reaction 2 a 1-acylglycerol = a 1,2-diacylglycerol + glycerol. It carries out the reaction a triacylglycerol + all-trans-retinol = an all-trans-retinyl ester + a diacylglycerol. The catalysed reaction is 1,2-di-(9Z-octadecenoyl)-glycerol + (9Z)-octadecenoate + H(+) = 1,2,3-tri-(9Z-octadecenoyl)-glycerol + H2O. The enzyme catalyses 1,2,3-tri-(9Z-octadecenoyl)-glycerol + H2O = 1,3-di-(9Z-octadecenoyl)-glycerol + (9Z)-octadecenoate + H(+). It catalyses the reaction 1-(9Z-octadecenoyl)-glycerol + 1,3-di-(9Z-octadecenoyl)-glycerol = 1,2,3-tri-(9Z-octadecenoyl)-glycerol + glycerol. It carries out the reaction 1-(9Z-octadecenoyl)-glycerol + 1,2-di-(9Z-octadecenoyl)-glycerol = 1,2,3-tri-(9Z-octadecenoyl)-glycerol + glycerol. The catalysed reaction is 2 1-(9Z-octadecenoyl)-glycerol = 1,2-di-(9Z-octadecenoyl)-glycerol + glycerol. The enzyme catalyses 1,2,3-tri-(9Z-octadecenoyl)-glycerol + all-trans-retinol = all-trans-retinyl 9Z-octadecenoate + di-(9Z)-octadecenoylglycerol. It catalyses the reaction 1,2,3-tri-(9Z)-hexadecenoylglycerol + H2O = 1,3-di-(9Z)-hexadecenoylglycerol + (9Z)-hexadecenoate + H(+). It carries out the reaction 1,2,3-tri-(9Z,12Z)-octadecadienoylglycerol + H2O = 1,3-di-(9Z,12Z)-octadecadienoylglycerol + (9Z,12Z)-octadecadienoate + H(+). The catalysed reaction is 1,2,3-tri-(9Z,12Z,15Z)-octadecatrienoylglycerol + H2O = 1,3-di-(9Z,12Z,15Z)-octadecatrienoylglycerol + (9Z,12Z,15Z)-octadecatrienoate + H(+). The enzyme catalyses 1,3-di-(9Z)-octadecenoyl-2-hexadecanoylglycerol + H2O = 1,3-di-(9Z-octadecenoyl)-glycerol + hexadecanoate + H(+). It catalyses the reaction 1,2-di-(9Z)-octadecenoyl-3-hexadecanoyl-sn-glycerol + H2O = 1-(9Z)-octadecenoyl-3-hexadecanoyl-sn-glycerol + (9Z)-octadecenoate + H(+). It carries out the reaction 1-hexadecanoyl-2,3-di-(9Z)-octadecenoyl-sn-glycerol + H2O = 1-hexadecanoyl-3-(9Z)-octadecenoyl-sn-glycerol + (9Z)-octadecenoate + H(+). The catalysed reaction is 1,2,3-tri-(9Z-octadecenoyl)-glycerol + H2O = 2,3-di-(9Z)-octadecenoyl-sn-glycerol + (9Z)-octadecenoate + H(+). The enzyme catalyses 1,2,3-tri-(9Z)-hexadecenoylglycerol + H2O = 2,3-di-(9Z)-hexadecenoyl-sn-glycerol + (9Z)-hexadecenoate + H(+). It catalyses the reaction 1,2,3-tri-(9Z,12Z)-octadecadienoylglycerol + H2O = 2,3-di-(9Z,12Z)-octadecadienoyl-sn-glycerol + (9Z,12Z)-octadecadienoate + H(+). It carries out the reaction 1,2,3-tri-(9Z,12Z,15Z)-octadecatrienoylglycerol + H2O = 2,3-di-(9Z,12Z,15Z)-octadecatrienoyl-sn-glycerol + (9Z,12Z,15Z)-octadecatrienoate + H(+). The catalysed reaction is 1,3-di-(9Z)-octadecenoyl-2-hexadecanoylglycerol + H2O = 2-hexadecanoyl-3-(9Z)-octadecenoyl-sn-glycerol + (9Z)-octadecenoate + H(+). The enzyme catalyses 1-hexadecanoyl-2,3-di-(9Z)-octadecenoyl-sn-glycerol + H2O = 2,3-di-(9Z)-octadecenoyl-sn-glycerol + hexadecanoate + H(+). It catalyses the reaction 1,2-di-(9Z)-octadecenoyl-3-hexadecanoyl-sn-glycerol + H2O = 2-(9Z-octadecenoyl)-3-hexadecanoyl-sn-glycerol + (9Z)-octadecenoate + H(+). It carries out the reaction a 1,2-diacyl-sn-glycero-3-phosphocholine + H2O = a 1-acyl-sn-glycero-3-phosphocholine + a fatty acid + H(+). The catalysed reaction is 1,2,3-tri-(9Z-octadecenoyl)-glycerol + 9-hydroxy-octadecanoate = 9-(9Z-octadecenoyloxy)-octadecanoate + 2,3-di-(9Z)-octadecenoyl-sn-glycerol. The enzyme catalyses 1-hexadecanoyl-2,3-di-(9Z)-octadecenoyl-sn-glycerol + 9-hydroxy-octadecanoate = 9-hexadecanoyloxy-octadecanoate + 2,3-di-(9Z)-octadecenoyl-sn-glycerol. It catalyses the reaction 1,2,3-tri-(10Z)-heptadecenoylglycerol + 9-hydroxy-octadecanoate = 2,3-di-(10Z-heptadecenoyl)-sn-glycerol + 9-(10Z-heptadecenoyloxy)-octadecanoate. It carries out the reaction 1,2,3-tri-(9Z,12Z)-octadecadienoylglycerol + 9-hydroxy-octadecanoate = 2,3-di-(9Z,12Z)-octadecadienoyl-sn-glycerol + 9-(9Z,12Z-octadecadienoyloxy)-octadecanoate. The catalysed reaction is 1,2,3-tri-(9Z)-hexadecenoylglycerol + 9-hydroxy-octadecanoate = 2,3-di-(9Z)-hexadecenoyl-sn-glycerol + 9-(9Z-hexadecenoyloxy)-octadecanoate. The enzyme catalyses 9-hydroxy-octadecanoate + 1,2-di-(9Z-octadecenoyl)-sn-glycerol = 9-(9Z-octadecenoyloxy)-octadecanoate + 2-(9Z-octadecenoyl)-glycerol. It catalyses the reaction 1-hexadecanoyl-2,3-di-(9Z)-octadecenoyl-sn-glycerol + 9-hydroxy-octadecanoate = 1-hexadecanoyl-3-(9Z)-octadecenoyl-sn-glycerol + 9-(9Z-octadecenoyloxy)-octadecanoate. The protein operates within glycerolipid metabolism; triacylglycerol degradation. Its function is as follows. Catalyzes the initial step in triglyceride hydrolysis in adipocyte and non-adipocyte lipid droplets. Exhibits a strong preference for the hydrolysis of long-chain fatty acid esters at the sn-2 position of the glycerol backbone and acts coordinately with LIPE/HLS and DGAT2 within the lipolytic cascade. Also possesses acylglycerol transacylase and phospholipase A2 activities. Transfers fatty acid from triglyceride to retinol, hydrolyzes retinylesters, and generates 1,3-diacylglycerol from triglycerides. Regulates adiposome size and may be involved in the degradation of adiposomes. Catalyzes the formation of an ester bond between hydroxy fatty acids and fatty acids derived from triglycerides or diglycerides to generate fatty acid esters of hydroxy fatty acids (FAHFAs) in adipocytes. Acts antagonistically with LDAH in regulation of cellular lipid stores. Inhibits LDAH-stimulated lipid droplet fusion. May play an important role in energy homeostasis. May play a role in the response of the organism to starvation, enhancing hydrolysis of triglycerides and providing free fatty acids to other tissues to be oxidized in situations of energy depletion. This Rattus norvegicus (Rat) protein is Patatin-like phospholipase domain-containing protein 2.